The sequence spans 300 residues: N-carbamoylputrescine amidase (300 aa).

One can recognise a CN hydrolase domain in the interval 8–266; sequence VTVAALQFAC…EAVLVAQFDL (259 aa). Catalysis depends on E47, which acts as the Proton acceptor. Catalysis depends on K120, which acts as the Proton donor. C157 acts as the Nucleophile in catalysis.

It belongs to the carbon-nitrogen hydrolase superfamily. As to quaternary structure, homooctamer.

The catalysed reaction is N-carbamoylputrescine + H2O + 2 H(+) = putrescine + NH4(+) + CO2. Its pathway is amine and polyamine biosynthesis; putrescine biosynthesis via agmatine pathway; putrescine from N-carbamoylputrescine (amidase route): step 1/1. In terms of biological role, involved in polyamine biosynthesis. The sequence is that of N-carbamoylputrescine amidase (CPA) from Solanum tuberosum (Potato).